A 588-amino-acid polypeptide reads, in one-letter code: Adenine deaminase (588 aa).

Belongs to the metallo-dependent hydrolases superfamily. Adenine deaminase family. The cofactor is Mn(2+).

It carries out the reaction adenine + H2O + H(+) = hypoxanthine + NH4(+). The protein is Adenine deaminase of Desulforamulus reducens (strain ATCC BAA-1160 / DSM 100696 / MI-1) (Desulfotomaculum reducens).